The chain runs to 207 residues: Vexin (207 aa).

Positions 56–100 (ELLPHRGDRRDPGDRRRFGRLQTARPPTAHPAKASARPVGISEPK) are disordered. Positions 58-71 (LPHRGDRRDPGDRR) are enriched in basic and acidic residues.

It belongs to the vexin family.

It localises to the cell membrane. The protein localises to the nucleus. Functionally, required for neurogenesis in the neural plate and retina. Strongly cooperates with neural bHLH factors to promote neurogenesis. In Homo sapiens (Human), this protein is Vexin.